The chain runs to 391 residues: Ferrochelatase (391 aa).

Fe cation is bound by residues His196 and Glu281.

This sequence belongs to the ferrochelatase family.

Its subcellular location is the cytoplasm. The catalysed reaction is heme b + 2 H(+) = protoporphyrin IX + Fe(2+). It participates in porphyrin-containing compound metabolism; protoheme biosynthesis; protoheme from protoporphyrin-IX: step 1/1. Its function is as follows. Catalyzes the ferrous insertion into protoporphyrin IX. This chain is Ferrochelatase, found in Synechococcus sp. (strain CC9311).